A 121-amino-acid chain; its full sequence is Ribonuclease P protein component (121 aa).

It belongs to the RnpA family. Consists of a catalytic RNA component (M1 or rnpB) and a protein subunit.

It catalyses the reaction Endonucleolytic cleavage of RNA, removing 5'-extranucleotides from tRNA precursor.. RNaseP catalyzes the removal of the 5'-leader sequence from pre-tRNA to produce the mature 5'-terminus. It can also cleave other RNA substrates such as 4.5S RNA. The protein component plays an auxiliary but essential role in vivo by binding to the 5'-leader sequence and broadening the substrate specificity of the ribozyme. The protein is Ribonuclease P protein component of Geobacillus kaustophilus (strain HTA426).